The chain runs to 174 residues: Transgelin (174 aa).

Residues 3–109 (SQLEKEAREW…SIHSFSRYAA (107 aa)) form the Calponin-homology (CH) domain.

In terms of assembly, binds to actin.

Its subcellular location is the cytoplasm. Functionally, has actin-binding and actin-bundling activity and is a component of the actin patch. Stabilizes actin filaments against disassembly. Cross-links F-actin and is required for the formation of the contractile F-actin ring. This Schizosaccharomyces pombe (strain 972 / ATCC 24843) (Fission yeast) protein is Transgelin (stg1).